Reading from the N-terminus, the 144-residue chain is Superoxide dismutase [Mn] 1 (144 aa).

Mn(2+) contacts are provided by His-42, Asp-124, and His-128.

It belongs to the iron/manganese superoxide dismutase family. Mn(2+) serves as cofactor.

The enzyme catalyses 2 superoxide + 2 H(+) = H2O2 + O2. Its function is as follows. Destroys superoxide anion radicals which are normally produced within the cells and which are toxic to biological systems. This is Superoxide dismutase [Mn] 1 (sod1) from Haloferax mediterranei (Halobacterium mediterranei).